A 274-amino-acid chain; its full sequence is 2-dehydro-3-deoxyphosphooctonate aldolase (274 aa).

The protein belongs to the KdsA family.

It localises to the cytoplasm. The enzyme catalyses D-arabinose 5-phosphate + phosphoenolpyruvate + H2O = 3-deoxy-alpha-D-manno-2-octulosonate-8-phosphate + phosphate. It functions in the pathway carbohydrate biosynthesis; 3-deoxy-D-manno-octulosonate biosynthesis; 3-deoxy-D-manno-octulosonate from D-ribulose 5-phosphate: step 2/3. Its pathway is bacterial outer membrane biogenesis; lipopolysaccharide biosynthesis. In Rickettsia peacockii (strain Rustic), this protein is 2-dehydro-3-deoxyphosphooctonate aldolase.